Consider the following 281-residue polypeptide: Trypsin zeta (281 aa).

The signal sequence occupies residues 1–23 (MSSSSWLGCLLAVLLSALALSQG). Positions 24-39 (LPLLEDLDENSFPDGR) are cleaved as a propeptide — activation peptide. The Peptidase S1 domain maps to 40–279 (IVGGYVTDIA…LRPWIDAVRA (240 aa)). A disulfide bridge connects residues Cys-73 and Cys-89. Catalysis depends on charge relay system residues His-88 and Asp-135. 2 cysteine pairs are disulfide-bonded: Cys-199/Cys-219 and Cys-231/Cys-255. Catalysis depends on Ser-235, which acts as the Charge relay system.

This sequence belongs to the peptidase S1 family.

It localises to the secreted. The protein resides in the extracellular space. It carries out the reaction Preferential cleavage: Arg-|-Xaa, Lys-|-Xaa.. This Drosophila erecta (Fruit fly) protein is Trypsin zeta (zetaTry).